A 118-amino-acid polypeptide reads, in one-letter code: Phosphoribosyl-AMP cyclohydrolase (118 aa).

Residue aspartate 87 coordinates Mg(2+). A Zn(2+)-binding site is contributed by cysteine 88. Mg(2+) is bound by residues aspartate 89 and aspartate 91. Zn(2+) is bound by residues cysteine 104 and cysteine 111.

This sequence belongs to the PRA-CH family. Homodimer. The cofactor is Mg(2+). Requires Zn(2+) as cofactor.

It localises to the cytoplasm. The enzyme catalyses 1-(5-phospho-beta-D-ribosyl)-5'-AMP + H2O = 1-(5-phospho-beta-D-ribosyl)-5-[(5-phospho-beta-D-ribosylamino)methylideneamino]imidazole-4-carboxamide. It participates in amino-acid biosynthesis; L-histidine biosynthesis; L-histidine from 5-phospho-alpha-D-ribose 1-diphosphate: step 3/9. In terms of biological role, catalyzes the hydrolysis of the adenine ring of phosphoribosyl-AMP. This chain is Phosphoribosyl-AMP cyclohydrolase, found in Corynebacterium glutamicum (strain R).